A 341-amino-acid chain; its full sequence is Solute carrier family 25 member 43 (341 aa).

Solcar repeat units follow at residues 11-101 (TGSQ…MDDL), 105-185 (SQWS…LLVY), and 200-298 (SHLQ…LYQN). Helical transmembrane passes span 16–36 (LLCAGLAGAFSLSLTAPLELA), 68–88 (LWKGNGVACLRLFPCSMVQLA), 110–130 (IVTGSLAGMVSTIVTYPTDLI), 166–186 (GVSLTVLGAVPFSAGSLLVYM), 205–225 (FANVCVAAAVSQTLSFPFDTV), and 262–282 (VLGLWNGLTANLLKVVPYFGV).

It belongs to the mitochondrial carrier (TC 2.A.29) family.

Its subcellular location is the mitochondrion inner membrane. In Mus musculus (Mouse), this protein is Solute carrier family 25 member 43 (Slc25a43).